Consider the following 94-residue polypeptide: Putative regulatory protein Tmel_0100 (94 aa).

This sequence belongs to the RemA family.

This Thermosipho melanesiensis (strain DSM 12029 / CIP 104789 / BI429) protein is Putative regulatory protein Tmel_0100.